A 667-amino-acid polypeptide reads, in one-letter code: DNA ligase (667 aa).

Residues Asp-34 to Asp-38, Ser-83 to Leu-84, and Glu-114 each bind NAD(+). The N6-AMP-lysine intermediate role is filled by Lys-116. The NAD(+) site is built by Arg-137, Glu-170, Lys-286, and Lys-310. Positions 404, 407, 422, and 427 each coordinate Zn(2+). Residues His-588–Asp-667 form the BRCT domain.

Belongs to the NAD-dependent DNA ligase family. LigA subfamily. Requires Mg(2+) as cofactor. Mn(2+) is required as a cofactor.

It carries out the reaction NAD(+) + (deoxyribonucleotide)n-3'-hydroxyl + 5'-phospho-(deoxyribonucleotide)m = (deoxyribonucleotide)n+m + AMP + beta-nicotinamide D-nucleotide.. In terms of biological role, DNA ligase that catalyzes the formation of phosphodiester linkages between 5'-phosphoryl and 3'-hydroxyl groups in double-stranded DNA using NAD as a coenzyme and as the energy source for the reaction. It is essential for DNA replication and repair of damaged DNA. This Spiroplasma citri protein is DNA ligase.